A 253-amino-acid chain; its full sequence is Phosphoadenosine 5'-phosphosulfate reductase (253 aa).

The Nucleophile; cysteine thiosulfonate intermediate role is filled by Cys239.

This sequence belongs to the PAPS reductase family. CysH subfamily.

The protein resides in the cytoplasm. It carries out the reaction [thioredoxin]-disulfide + sulfite + adenosine 3',5'-bisphosphate + 2 H(+) = [thioredoxin]-dithiol + 3'-phosphoadenylyl sulfate. It functions in the pathway sulfur metabolism; hydrogen sulfide biosynthesis; sulfite from sulfate: step 3/3. In terms of biological role, catalyzes the formation of sulfite from phosphoadenosine 5'-phosphosulfate (PAPS) using thioredoxin as an electron donor. In Aliivibrio fischeri (strain ATCC 700601 / ES114) (Vibrio fischeri), this protein is Phosphoadenosine 5'-phosphosulfate reductase.